Here is a 361-residue protein sequence, read N- to C-terminus: UDP-N-acetylglucosamine--N-acetylmuramyl-(pentapeptide) pyrophosphoryl-undecaprenol N-acetylglucosamine transferase (361 aa).

UDP-N-acetyl-alpha-D-glucosamine-binding positions include 12 to 14 (TGG), asparagine 124, arginine 163, serine 189, isoleucine 241, 260 to 265 (ALTVSE), and glutamine 286.

The protein belongs to the glycosyltransferase 28 family. MurG subfamily.

The protein resides in the cell inner membrane. The enzyme catalyses di-trans,octa-cis-undecaprenyl diphospho-N-acetyl-alpha-D-muramoyl-L-alanyl-D-glutamyl-meso-2,6-diaminopimeloyl-D-alanyl-D-alanine + UDP-N-acetyl-alpha-D-glucosamine = di-trans,octa-cis-undecaprenyl diphospho-[N-acetyl-alpha-D-glucosaminyl-(1-&gt;4)]-N-acetyl-alpha-D-muramoyl-L-alanyl-D-glutamyl-meso-2,6-diaminopimeloyl-D-alanyl-D-alanine + UDP + H(+). The protein operates within cell wall biogenesis; peptidoglycan biosynthesis. In terms of biological role, cell wall formation. Catalyzes the transfer of a GlcNAc subunit on undecaprenyl-pyrophosphoryl-MurNAc-pentapeptide (lipid intermediate I) to form undecaprenyl-pyrophosphoryl-MurNAc-(pentapeptide)GlcNAc (lipid intermediate II). In Aeromonas hydrophila subsp. hydrophila (strain ATCC 7966 / DSM 30187 / BCRC 13018 / CCUG 14551 / JCM 1027 / KCTC 2358 / NCIMB 9240 / NCTC 8049), this protein is UDP-N-acetylglucosamine--N-acetylmuramyl-(pentapeptide) pyrophosphoryl-undecaprenol N-acetylglucosamine transferase.